Reading from the N-terminus, the 332-residue chain is Fructose-bisphosphate aldolase (332 aa).

D-glyceraldehyde 3-phosphate is bound at residue serine 56. Residue aspartate 93 is the Proton donor of the active site. The Zn(2+) site is built by histidine 94, aspartate 115, glutamate 147, and histidine 191. A dihydroxyacetone phosphate-binding site is contributed by glycine 192. Position 234 (histidine 234) interacts with Zn(2+). Dihydroxyacetone phosphate contacts are provided by residues 235 to 237 (GAS) and 277 to 280 (NIDS).

This sequence belongs to the class II fructose-bisphosphate aldolase family. As to quaternary structure, homodimer. Zn(2+) is required as a cofactor.

The enzyme catalyses beta-D-fructose 1,6-bisphosphate = D-glyceraldehyde 3-phosphate + dihydroxyacetone phosphate. It functions in the pathway carbohydrate degradation; glycolysis; D-glyceraldehyde 3-phosphate and glycerone phosphate from D-glucose: step 4/4. Catalyzes the aldol condensation of dihydroxyacetone phosphate (DHAP or glycerone-phosphate) with glyceraldehyde 3-phosphate (G3P) to form fructose 1,6-bisphosphate (FBP) in gluconeogenesis and the reverse reaction in glycolysis. The polypeptide is Fructose-bisphosphate aldolase (fba) (Treponema pallidum (strain Nichols)).